The sequence spans 283 residues: MSIGVFDSGVGGLTVHRALVNRLPQADFIYLADQANAPYGGRPGEEIVALTRAGCERLFDAGASLVVLACNTASAIALRRLQQTWLPGYRKALGRPINVLGIIVPTIEAATGLPWEHEAERRGEKVEQLDILGVFSTPGTAASRVYEIEIDKRRQDVAVFSEPCPNLARMIEAGAGAVELATEVERHVQQLKTRIGRYPDRAILGCTHYEIIADLFRAALPAGTPLIHQPASTADALELYFQRHPELDPGTGGGRVFLTTGTPGPQNALVETFWGGPLRFEAA.

Residues 7 to 8 (DS) and 39 to 40 (YG) each bind substrate. Cysteine 70 acts as the Proton donor/acceptor in catalysis. 71 to 72 (NT) is a substrate binding site. Cysteine 206 functions as the Proton donor/acceptor in the catalytic mechanism. Position 207 to 208 (207 to 208 (TH)) interacts with substrate.

The protein belongs to the aspartate/glutamate racemases family.

The catalysed reaction is L-glutamate = D-glutamate. The protein operates within cell wall biogenesis; peptidoglycan biosynthesis. In terms of biological role, provides the (R)-glutamate required for cell wall biosynthesis. The chain is Glutamate racemase from Caulobacter sp. (strain K31).